Reading from the N-terminus, the 520-residue chain is MSLRYPISRIRHFRCQLRELLAAVAGPSIRIFDAGTGSLLSSWPPASYMRPLDSEISPDRASSAGTCAEPPEKRRKLTPPVDESGEAQTEQSAKAKARKSQTAEQAWSTIPILVISGTGDHIVAVTGEDKCLRVFEVKQDGKLTQLTERCIPKRPCAISLTPDNNTILCGDKFGDVYSLPLLPRDEVVLPLRKAAESSKPFQPSATKLTVHTQRNLKALEQQLRTPRAAQEKLEPSFQHRLLLGHVSMLTDLILAPVPSDSSTSPRLYIITSDRDEHIRVSRGPSQAHIIHGYCLGHTSFVSKLCIPPWDPRSLISGGGDNCIICWDWLAGRVAQTIPLVHDGDVAESTKAQPPQSDAPDIAVSGIYAIPFSGNPGLTEHASGGILVALEGVSRLLAFSFGTNGRLTALAPIELSGNALDVVALDDRGTILVSVDNVHKPGSTKELRDSAIGPKLLQCFSARSDGGLKWEESSTQAATTINSREAVDIIAETESRKQVQKISDSLYGIGNLRKWARGEDG.

A disordered region spans residues 51-102; that stretch reads PLDSEISPDRASSAGTCAEPPEKRRKLTPPVDESGEAQTEQSAKAKARKSQT. 3 WD repeats span residues 105-145, 244-291, and 296-338; these read QAWS…KLTQ, GHVS…HIIH, and GHTS…QTIP.

This sequence belongs to the WD repeat TRM82 family. Forms a heterodimer with the catalytic subunit TRM8.

It localises to the nucleus. It participates in tRNA modification; N(7)-methylguanine-tRNA biosynthesis. Functionally, required for the formation of N(7)-methylguanine at position 46 (m7G46) in tRNA. In the complex, it is required to stabilize and induce conformational changes of the catalytic subunit. The polypeptide is tRNA (guanine-N(7)-)-methyltransferase non-catalytic subunit TRM82 (Coccidioides immitis (strain RS) (Valley fever fungus)).